The chain runs to 229 residues: Sodium channel modifier 1 (229 aa).

Serine 2 is modified (phosphoserine). A Bipartite nuclear localization signal motif is present at residues 4–20 (KREGDDWSQLNVLKKRR). The Matrin-type zinc finger occupies 42–74 (FACAICPHRPVLDTLAMLTAHRAGKKHLSSLKL). Lysine 67 participates in a covalent cross-link: Glycyl lysine isopeptide (Lys-Gly) (interchain with G-Cter in SUMO2). Disordered stretches follow at residues 80–105 (QTGK…EAPL) and 128–187 (RRKH…TKRR). Over residues 82-92 (GKGTEQNPRQQ) the composition is skewed to polar residues. Residues 157–171 (ISKEPEPRERSDAKE) show a composition bias toward basic and acidic residues. Residues serine 182 and serine 218 each carry the phosphoserine modification. The segment at 187–229 (RVLNHYLTLRSSGWVPDGRGRWIKDENVEFDSDEEEPPDLPLD) is required for interaction with LUC7L2.

As to quaternary structure, component of the minor spliceosome. Within this complex, interacts with RNF113A, as well as with SF3B1/SF3b155, SF3B2/SF3b145, SF3B3/SF3b130 and CDC5L. May interact with LUC7L2 and SNRNP70.

It localises to the nucleus. It is found in the nucleoplasm. The protein resides in the nucleus speckle. Its function is as follows. As a component of the minor spliceosome, involved in the splicing of U12-type introns in pre-mRNAs. Plays a role in the regulation of primary cilia length and Hedgehog signaling. The sequence is that of Sodium channel modifier 1 (Scnm1) from Mus musculus (Mouse).